A 1074-amino-acid chain; its full sequence is Chitin synthase 2 (1074 aa).

Disordered stretches follow at residues 1–32 (MSHYHRQGGPGQPHDSYEDQQQPYYTDQAHSG), 56–179 (QAAP…PSQH), and 209–255 (RSDS…PYNN). Residues 19–29 (DQQQPYYTDQA) are compositionally biased toward polar residues. A compositionally biased stretch (low complexity) spans 68–80 (RIRSNSSGSRSVS). 2 N-linked (GlcNAc...) asparagine glycosylation sites follow: Asn-72 and Asn-97. Over residues 85 to 119 (AYTNQGIPPVPSNLSAARQRSDPSQALPPSSSSYA) the composition is skewed to polar residues. Residues 129 to 143 (SSHRNAPNAPNSNHP) are compositionally biased toward low complexity. Asn-149 carries N-linked (GlcNAc...) asparagine glycosylation. Residue Asn-289 is glycosylated (N-linked (GlcNAc...) asparagine). 8 consecutive transmembrane segments (helical) span residues 608–628 (VFGFISVLPGAFSAYRYKALL), 742–762 (LVLLVFSWFGIANFFLAFYFL), 779–799 (GAAIVEIFQNIFIAMVIVVLV), 817–837 (IIIFALIMGLALYAAGYTIYL), 867–887 (IVISLAATYVMWLLCSLLHLE), 891–911 (MLTSFVQYLFLTPTYVIILSM), 1001–1021 (LVLIWMCTNALVVIIFTSTWW), and 1048–1068 (IFWSTAGLSAVRFVGSITFLL).

The protein belongs to the chitin synthase family. Class II subfamily.

It localises to the cell membrane. The protein resides in the cytoplasmic vesicle membrane. It carries out the reaction [(1-&gt;4)-N-acetyl-beta-D-glucosaminyl](n) + UDP-N-acetyl-alpha-D-glucosamine = [(1-&gt;4)-N-acetyl-beta-D-glucosaminyl](n+1) + UDP + H(+). Functionally, polymerizes chitin, a structural polymer of the cell wall and septum, by transferring the sugar moiety of UDP-GlcNAc to the non-reducing end of the growing chitin polymer. This Mycosarcoma maydis (Corn smut fungus) protein is Chitin synthase 2 (CHS2).